Here is a 287-residue protein sequence, read N- to C-terminus: Ribosomal RNA small subunit methyltransferase A (287 aa).

S-adenosyl-L-methionine-binding residues include Asn-28, Leu-30, Gly-55, Glu-77, Asp-103, and Asn-123.

It belongs to the class I-like SAM-binding methyltransferase superfamily. rRNA adenine N(6)-methyltransferase family. RsmA subfamily.

Its subcellular location is the cytoplasm. The catalysed reaction is adenosine(1518)/adenosine(1519) in 16S rRNA + 4 S-adenosyl-L-methionine = N(6)-dimethyladenosine(1518)/N(6)-dimethyladenosine(1519) in 16S rRNA + 4 S-adenosyl-L-homocysteine + 4 H(+). In terms of biological role, specifically dimethylates two adjacent adenosines (A1518 and A1519) in the loop of a conserved hairpin near the 3'-end of 16S rRNA in the 30S particle. May play a critical role in biogenesis of 30S subunits. The polypeptide is Ribosomal RNA small subunit methyltransferase A (Rhodopseudomonas palustris (strain HaA2)).